The primary structure comprises 455 residues: Bifunctional protein GlmU (455 aa).

The pyrophosphorylase stretch occupies residues 1 to 226; the sequence is MSLDIVILAA…AMEVQGANDR (226 aa). Residues 8-11, K22, Q73, 78-79, 99-101, G136, E151, N166, and N224 contribute to the UDP-N-acetyl-alpha-D-glucosamine site; these read LAAG, GT, and YGD. D101 is a binding site for Mg(2+). Residue N224 coordinates Mg(2+). A linker region spans residues 227 to 247; the sequence is KQLSELERHYQMREARRLMAA. The segment at 248–455 is N-acetyltransferase; the sequence is GVTLRDPARF…WKRPVKISKD (208 aa). Positions 330 and 348 each coordinate UDP-N-acetyl-alpha-D-glucosamine. H360 acts as the Proton acceptor in catalysis. 2 residues coordinate UDP-N-acetyl-alpha-D-glucosamine: Y363 and N374. Acetyl-CoA contacts are provided by residues A377, 383 to 384, S402, A420, and R437; that span reads NY.

It in the N-terminal section; belongs to the N-acetylglucosamine-1-phosphate uridyltransferase family. The protein in the C-terminal section; belongs to the transferase hexapeptide repeat family. As to quaternary structure, homotrimer. The cofactor is Mg(2+).

The protein localises to the cytoplasm. The catalysed reaction is alpha-D-glucosamine 1-phosphate + acetyl-CoA = N-acetyl-alpha-D-glucosamine 1-phosphate + CoA + H(+). It carries out the reaction N-acetyl-alpha-D-glucosamine 1-phosphate + UTP + H(+) = UDP-N-acetyl-alpha-D-glucosamine + diphosphate. It functions in the pathway nucleotide-sugar biosynthesis; UDP-N-acetyl-alpha-D-glucosamine biosynthesis; N-acetyl-alpha-D-glucosamine 1-phosphate from alpha-D-glucosamine 6-phosphate (route II): step 2/2. The protein operates within nucleotide-sugar biosynthesis; UDP-N-acetyl-alpha-D-glucosamine biosynthesis; UDP-N-acetyl-alpha-D-glucosamine from N-acetyl-alpha-D-glucosamine 1-phosphate: step 1/1. Its pathway is bacterial outer membrane biogenesis; LPS lipid A biosynthesis. Its function is as follows. Catalyzes the last two sequential reactions in the de novo biosynthetic pathway for UDP-N-acetylglucosamine (UDP-GlcNAc). The C-terminal domain catalyzes the transfer of acetyl group from acetyl coenzyme A to glucosamine-1-phosphate (GlcN-1-P) to produce N-acetylglucosamine-1-phosphate (GlcNAc-1-P), which is converted into UDP-GlcNAc by the transfer of uridine 5-monophosphate (from uridine 5-triphosphate), a reaction catalyzed by the N-terminal domain. This Pseudomonas syringae pv. syringae (strain B728a) protein is Bifunctional protein GlmU.